The sequence spans 154 residues: Ribosomal RNA large subunit methyltransferase H (154 aa).

Residue Gly103 participates in S-adenosyl-L-methionine binding.

It belongs to the RNA methyltransferase RlmH family. Homodimer.

It is found in the cytoplasm. The enzyme catalyses pseudouridine(1915) in 23S rRNA + S-adenosyl-L-methionine = N(3)-methylpseudouridine(1915) in 23S rRNA + S-adenosyl-L-homocysteine + H(+). In terms of biological role, specifically methylates the pseudouridine at position 1915 (m3Psi1915) in 23S rRNA. This is Ribosomal RNA large subunit methyltransferase H from Gemmatimonas aurantiaca (strain DSM 14586 / JCM 11422 / NBRC 100505 / T-27).